We begin with the raw amino-acid sequence, 417 residues long: Serine--tRNA ligase (417 aa).

Residue 226-228 (TSE) participates in L-serine binding. ATP contacts are provided by residues 257–259 (RRE) and V273. E280 provides a ligand contact to L-serine. Residue 344–347 (ELTS) coordinates ATP. Residue T379 participates in L-serine binding.

This sequence belongs to the class-II aminoacyl-tRNA synthetase family. Type-1 seryl-tRNA synthetase subfamily. Homodimer. The tRNA molecule binds across the dimer.

The protein resides in the cytoplasm. The enzyme catalyses tRNA(Ser) + L-serine + ATP = L-seryl-tRNA(Ser) + AMP + diphosphate + H(+). The catalysed reaction is tRNA(Sec) + L-serine + ATP = L-seryl-tRNA(Sec) + AMP + diphosphate + H(+). It participates in aminoacyl-tRNA biosynthesis; selenocysteinyl-tRNA(Sec) biosynthesis; L-seryl-tRNA(Sec) from L-serine and tRNA(Sec): step 1/1. Functionally, catalyzes the attachment of serine to tRNA(Ser). Is also able to aminoacylate tRNA(Sec) with serine, to form the misacylated tRNA L-seryl-tRNA(Sec), which will be further converted into selenocysteinyl-tRNA(Sec). The chain is Serine--tRNA ligase from Mycobacterium sp. (strain JLS).